Consider the following 226-residue polypeptide: MGALRKAGVWLGLVEEDDERAYDDAGYDKGGYRESRYRSSRYSEDFGDEDDEDEEAAVPRSRRGDRSRLERAAARSGDVDHNVEGEQPERVERASVRSITRSAEPSESLTYHTRDNLALAPQPVRERVPADEEQRYQITTLHPTTYREARTIGEHFRDGVPVIINLTEMDEADARRLVDFAAGLAFGLRGTIERVTNRVFLLSPANVQVTAEDKAKIAEGGFFSLS.

Residues 20–116 are disordered; that stretch reads RAYDDAGYDK…ESLTYHTRDN (97 aa). The span at 22 to 44 shows a compositional bias: basic and acidic residues; sequence YDDAGYDKGGYRESRYRSSRYSE. Acidic residues predominate over residues 45 to 56; it reads DFGDEDDEDEEA. The segment covering 62 to 95 has biased composition (basic and acidic residues); it reads RRGDRSRLERAAARSGDVDHNVEGEQPERVERAS. The span at 97-111 shows a compositional bias: polar residues; sequence RSITRSAEPSESLTY.

This sequence belongs to the SepF family. In terms of assembly, homodimer. Interacts with FtsZ.

The protein resides in the cytoplasm. In terms of biological role, cell division protein that is part of the divisome complex and is recruited early to the Z-ring. Probably stimulates Z-ring formation, perhaps through the cross-linking of FtsZ protofilaments. Its function overlaps with FtsA. In Salinispora arenicola (strain CNS-205), this protein is Cell division protein SepF.